We begin with the raw amino-acid sequence, 419 residues long: Phosphatidylinositol 5-phosphate 4-kinase type-2 gamma (419 aa).

The PIPK domain occupies A46 to F418. The span at Q299 to T310 shows a compositional bias: acidic residues. Residues Q299 to V320 are disordered.

Phosphorylated, phosphorylation is induced by EGF.

It is found in the endoplasmic reticulum. It localises to the cytoplasm. It carries out the reaction a 1,2-diacyl-sn-glycero-3-phospho-(1D-myo-inositol-5-phosphate) + ATP = a 1,2-diacyl-sn-glycero-3-phospho-(1D-myo-inositol-4,5-bisphosphate) + ADP + H(+). The catalysed reaction is 1,2-dihexadecanoyl-sn-glycero-3-phospho-(1D-myo-inositol-5-phosphate) + ATP = 1,2-dihexadecanoyl-sn-glycero-3-phospho-(1D-myo-inositol-4,5-bisphosphate) + ADP + H(+). It catalyses the reaction 1,2-dihexadecanoyl-sn-glycero-3-phospho-(1D-myo-inositol-5-phosphate) + GTP = 1,2-dihexadecanoyl-sn-glycero-3-phospho-(1D-myo-inositol-4,5-bisphosphate) + GDP + H(+). In terms of biological role, phosphatidylinositol 5-phosphate 4-kinase with low enzymatic activity. May be a GTP sensor, has higher GTP-dependent kinase activity than ATP-dependent kinase activity. This Xenopus tropicalis (Western clawed frog) protein is Phosphatidylinositol 5-phosphate 4-kinase type-2 gamma (pip4k2c).